The primary structure comprises 475 residues: AAA-ATPase At1g43910 (475 aa).

A helical transmembrane segment spans residues 11-28 (VSAVFSLYTSFSAITMLF). Thr85 carries the post-translational modification Phosphothreonine. 246–253 (GPPGTGKS) contacts ATP. Disordered regions lie at residues 306 to 328 (SRRR…PQKR) and 453 to 475 (KGED…EAET). Positions 457–467 (SSVEEEGEIED) are enriched in acidic residues.

This sequence belongs to the AAA ATPase family. BCS1 subfamily. Mg(2+) serves as cofactor. Expressed in developing shoots.

It localises to the membrane. The catalysed reaction is ATP + H2O = ADP + phosphate + H(+). This chain is AAA-ATPase At1g43910, found in Arabidopsis thaliana (Mouse-ear cress).